We begin with the raw amino-acid sequence, 396 residues long: Alanine racemase (396 aa).

The active-site Proton acceptor; specific for D-alanine is Lys-46. Lys-46 carries the N6-(pyridoxal phosphate)lysine modification. Residue Arg-145 coordinates substrate. Tyr-280 acts as the Proton acceptor; specific for L-alanine in catalysis. Met-328 contacts substrate.

This sequence belongs to the alanine racemase family. Pyridoxal 5'-phosphate is required as a cofactor.

The enzyme catalyses L-alanine = D-alanine. It functions in the pathway amino-acid biosynthesis; D-alanine biosynthesis; D-alanine from L-alanine: step 1/1. Functionally, catalyzes the interconversion of L-alanine and D-alanine. May also act on other amino acids. The chain is Alanine racemase (alr) from Brucella abortus (strain 2308).